The sequence spans 199 residues: MKFTTLATLALGAVSALAAPVTELESRQLFCRDVYVFFARGTGEVGTLGTVVGPGLSAAVKLAVRDSVEFEGIDYPALVSGYLAGGDRGGARTMANKVSQTASRCPNAKIFISGYSQGAQVTHLAARQLSAADQARVTGVVTFGDPYRDDALPGGLQSRRKTYCNVGDLICAGLPTLLAPHFTYGSDTPDAARWIAARV.

The first 18 residues, Met-1–Ala-18, serve as a signal peptide directing secretion. A propeptide spanning residues Ala-19–Arg-27 is cleaved from the precursor. Gln-28 bears the Pyrrolidone carboxylic acid mark. Residues Cys-31 and Cys-105 are joined by a disulfide bond. Ser-116 (nucleophile) is an active-site residue. Cys-164 and Cys-171 are oxidised to a cystine. Asp-168 is a catalytic residue. The Proton donor/acceptor role is filled by His-181.

Belongs to the cutinase family. The 2 disulfide bonds play a critical role in holding the catalytic residues in juxta-position; reduction of the disulfide bridges results in the complete inactivation of the enzyme.

It catalyses the reaction cutin + H2O = cutin monomers.. Functionally, catalyzes the hydrolysis of complex carboxylic polyesters found in the cell wall of plants. Degrades cutin, a macromolecule that forms the structure of the plant cuticle. Also degrades suberin, a specialized macromolecule found in the cell wall of various plant tissues. This chain is Cutinase CUT1, found in Coprinopsis cinerea (Inky cap fungus).